The primary structure comprises 546 residues: Protein FAM124A (546 aa).

3 disordered regions span residues 1 to 37 (MDPKAGGGGEEDDCVDSGAETGGSDYSHLSSTSSELS), 285 to 361 (KFPK…QRSK), and 488 to 546 (SSSS…EFYI). Residues 24 to 36 (SDYSHLSSTSSEL) are compositionally biased toward low complexity. Residues 285–302 (KFPKPGRVHHSSEKKRHS) show a composition bias toward basic residues. Polar residues-rich tracts occupy residues 304 to 324 (PLPSTAVPSHTPGSSQQSPLN) and 347 to 361 (ANSTPNPPWSFQRSK). The segment covering 488–511 (SSSSATARAAPPAPSTSTLTDSSP) has biased composition (low complexity).

This sequence belongs to the FAM124 family.

The sequence is that of Protein FAM124A (FAM124A) from Pongo abelii (Sumatran orangutan).